Here is a 748-residue protein sequence, read N- to C-terminus: tRNA endonuclease ANKZF1 (748 aa).

The C2H2-type zinc-finger motif lies at 96–120; sequence LFCSACDQIFQNHQEQREHYKLDWH. The disordered stretch occupies residues 135–185; sequence SASDFEQQSSTGDLSSISGSDDTDSSSEEDLLPLDEGRAESEKPNRPPGFY. Residues 143 to 154 show a composition bias toward low complexity; the sequence is SSTGDLSSISGS. Residues 155 to 167 are compositionally biased toward acidic residues; that stretch reads DDTDSSSEEDLLP. Basic and acidic residues predominate over residues 169–179; the sequence is DEGRAESEKPN. Residues 227–370 form the VLRF1 domain; it reads GPRYYVVLMA…QRVLHKLTTL (144 aa). Glutamine 270 is an active-site residue. Phosphoserine is present on residues serine 282 and serine 385. Residues 383 to 408 show a composition bias toward basic and acidic residues; sequence FHSPETHWKPVREERKKDTEKEKTKV. Disordered regions lie at residues 383–438 and 460–497; these read FHSP…SEVE and RRRR…TQEV. The segment covering 429 to 438 has biased composition (acidic residues); the sequence is SQEEDGSEVE. Over residues 484-497 the composition is skewed to polar residues; that stretch reads QPQDEPFSQPTQEV. Residues 515-545 form an ANK 1 repeat; that stretch reads ELWDTLLAACRAGEVEVLKLQLATGLVDPGV. Serine 555 carries the phosphoserine modification. An ANK 2 repeat occupies 556-585; that stretch reads GGFTLLHAAAAAGRGLVVRLLLEAGADPTV. The interval 621-677 is disordered; that stretch reads KARVPGPLTQEMEARQATRKKEQKAARRQREQQQRKQREQEEQEQEEQRRFAALSDR. Residues 628 to 681 adopt a coiled-coil conformation; the sequence is LTQEMEARQATRKKEQKAARRQREQQQRKQREQEEQEQEEQRRFAALSDREKRA. Position 629 is a phosphothreonine (threonine 629). The segment covering 632-677 has biased composition (basic and acidic residues); that stretch reads MEARQATRKKEQKAARRQREQQQRKQREQEEQEQEEQRRFAALSDR. The interval 654 to 666 is VCP/p97-interacting motif (VIM); it reads QRKQREQEEQEQE. Position 702 is a phosphoserine (serine 702).

Belongs to the ANKZF1/VMS1 family. In terms of assembly, interacts (via VIM motif) with VCP.

Its subcellular location is the cytoplasm. Endonuclease that cleaves polypeptidyl-tRNAs downstream of the ribosome-associated quality control (RQC) pathway to release incompletely synthesized polypeptides for degradation. The RQC pathway disassembles aberrantly stalled translation complexes to recycle or degrade the constituent parts. ANKZF1 acts downstream disassembly of stalled ribosomes and specifically cleaves off the terminal 3'-CCA nucleotides universal to all tRNAs from polypeptidyl-tRNAs, releasing (1) ubiquitinated polypeptides from 60S ribosomal subunit for degradation and (2) cleaved tRNAs. ANKZF1-cleaved tRNAs are then repaired and recycled by ELAC1 and TRNT1. Also plays a role in the cellular response to hydrogen peroxide and in the maintenance of mitochondrial integrity under conditions of cellular stress. This Mus musculus (Mouse) protein is tRNA endonuclease ANKZF1.